We begin with the raw amino-acid sequence, 47 residues long: Fasciclin-like arabinogalactan protein (47 aa).

Positions 1–47 (APTPATLNGLTIFAPNDEAFKATGVPDLSKLSNAPMVSLLQYHAAAR) constitute an FAS1 domain.

Belongs to the fasciclin-like AGP family.

Its function is as follows. May be a cell surface adhesion protein. The chain is Fasciclin-like arabinogalactan protein from Jatropha curcas (Barbados nut).